The sequence spans 239 residues: Lactate utilization protein A (239 aa).

The protein belongs to the LutA/YkgE family.

In terms of biological role, is involved in L-lactate degradation and allows cells to grow with lactate as the sole carbon source. The protein is Lactate utilization protein A of Geobacillus kaustophilus (strain HTA426).